The chain runs to 213 residues: Riboflavin/roseoflavin transporter RibM (213 aa).

5 consecutive transmembrane segments (helical) span residues 15–35, 38–58, 107–129, 136–158, and 171–193; these read HIIWSDMVGNILGLITLALGF, SLWTWPVQFLSGLVLFGAFYG, IAAAAVGTVAVALLFKAYPSLSW, YIFVGTIVAMYAQARGMVEFWFA, and FANGYAFSGFVYVIYGALVLWGM.

The protein belongs to the nicotinamide ribonucleoside (NR) uptake permease (TC 4.B.1) family.

Its subcellular location is the cell membrane. Functionally, transports riboflavin and roseoflavin. Can also transport FMN and FAD. May confer roseoflavin resistance to S.davawensis, which naturally produces this antibiotic during stationary growth phase. This chain is Riboflavin/roseoflavin transporter RibM, found in Streptomyces davaonensis (strain DSM 101723 / JCM 4913 / KCC S-0913 / 768).